The primary structure comprises 341 residues: MKIAIDAMGGDNAPEVVIAGVEKARDANKELTFLLYGDEAKIKPLIHHDERLTIIHTPEKINSDDEPVRAIRRKKQASMVLAAQAVKQGEADAMVSLGSTGALLAAGLFIIGRIRAIERPGLLPTLPTVDGKGFVMLDVGANAENRPYHLLQYAIMGSYYAKDVRNVENPRVGLLNNGTEANKGDKMHQEAHDLLAAAPGINFVGNVESSDILNGPADVVVTDGFTGNATLKAIEGTVRTVMHMLKGAIYEGGLSGKLGGLFLKGNLKSMASTFDISSYGGAVLLGLKAPLIKAHGAADAETVYYTLLQTAKMVQNGTVTKVADYFDAHPEVAEAKTAEKA.

The protein belongs to the PlsX family. As to quaternary structure, homodimer. Probably interacts with PlsY.

It localises to the cytoplasm. It catalyses the reaction a fatty acyl-[ACP] + phosphate = an acyl phosphate + holo-[ACP]. It participates in lipid metabolism; phospholipid metabolism. Catalyzes the reversible formation of acyl-phosphate (acyl-PO(4)) from acyl-[acyl-carrier-protein] (acyl-ACP). This enzyme utilizes acyl-ACP as fatty acyl donor, but not acyl-CoA. This chain is Phosphate acyltransferase, found in Lacticaseibacillus casei (strain BL23) (Lactobacillus casei).